The primary structure comprises 288 residues: Protease HtpX homolog (288 aa).

2 helical membrane-spanning segments follow: residues 7 to 27 (TAVL…MLGG) and 29 to 49 (QGML…YWFS). Zn(2+) is bound at residue histidine 131. Glutamate 132 is a catalytic residue. Histidine 135 contacts Zn(2+). 2 helical membrane passes run 141-161 (ILIS…ANFA) and 177-197 (IASL…QMSI). Glutamate 202 lines the Zn(2+) pocket.

It belongs to the peptidase M48B family. Zn(2+) is required as a cofactor.

The protein localises to the cell inner membrane. In Polynucleobacter necessarius subsp. necessarius (strain STIR1), this protein is Protease HtpX homolog.